The primary structure comprises 187 residues: UPF0340 protein SPN23F05980 (187 aa).

It belongs to the UPF0340 family.

The sequence is that of UPF0340 protein SPN23F05980 from Streptococcus pneumoniae (strain ATCC 700669 / Spain 23F-1).